Here is a 595-residue protein sequence, read N- to C-terminus: Arginine--tRNA ligase (595 aa).

The 'HIGH' region motif lies at 132–142 (ANPTGPLHVGH).

This sequence belongs to the class-I aminoacyl-tRNA synthetase family. Monomer.

It is found in the cytoplasm. The enzyme catalyses tRNA(Arg) + L-arginine + ATP = L-arginyl-tRNA(Arg) + AMP + diphosphate. This chain is Arginine--tRNA ligase, found in Cupriavidus pinatubonensis (strain JMP 134 / LMG 1197) (Cupriavidus necator (strain JMP 134)).